A 353-amino-acid chain; its full sequence is Tetraacyldisaccharide 4'-kinase (353 aa).

Position 49–56 (49–56 (TAGGTGKT)) interacts with ATP.

It belongs to the LpxK family.

The enzyme catalyses a lipid A disaccharide + ATP = a lipid IVA + ADP + H(+). It participates in glycolipid biosynthesis; lipid IV(A) biosynthesis; lipid IV(A) from (3R)-3-hydroxytetradecanoyl-[acyl-carrier-protein] and UDP-N-acetyl-alpha-D-glucosamine: step 6/6. In terms of biological role, transfers the gamma-phosphate of ATP to the 4'-position of a tetraacyldisaccharide 1-phosphate intermediate (termed DS-1-P) to form tetraacyldisaccharide 1,4'-bis-phosphate (lipid IVA). The polypeptide is Tetraacyldisaccharide 4'-kinase (Chlorobium phaeovibrioides (strain DSM 265 / 1930) (Prosthecochloris vibrioformis (strain DSM 265))).